The sequence spans 63 residues: Large ribosomal subunit protein bL32 (63 aa).

The interval 1-27 is disordered; that stretch reads MANPKAKMSKSRRDKRRAQFNARTKPA. Basic residues predominate over residues 7–18; sequence KMSKSRRDKRRA.

Belongs to the bacterial ribosomal protein bL32 family.

The sequence is that of Large ribosomal subunit protein bL32 from Pelodictyon phaeoclathratiforme (strain DSM 5477 / BU-1).